Here is a 453-residue protein sequence, read N- to C-terminus: Malate dehydrogenase [NADP], chloroplastic (453 aa).

The N-terminal 68 residues, 1–68 (MAVVKLSPWA…RLSSPASIRC (68 aa)), are a transit peptide targeting the chloroplast. A disulfide bridge links cysteine 88 with cysteine 93. 117-123 (GAAGMIS) lines the NADP(+) pocket. The substrate site is built by arginine 198 and arginine 204. NADP(+) contacts are provided by residues asparagine 211, glutamine 218, and 235 to 237 (VGN). 2 residues coordinate substrate: asparagine 237 and arginine 268. Catalysis depends on histidine 293, which acts as the Proton acceptor. Cysteine 429 and cysteine 441 are oxidised to a cystine.

The protein belongs to the LDH/MDH superfamily. MDH type 2 family. In terms of assembly, homodimer.

It is found in the plastid. The protein localises to the chloroplast. It carries out the reaction (S)-malate + NADP(+) = oxaloacetate + NADPH + H(+). Chloroplast NADP-MDH is activated upon illumination. In order to be enzymatically active, disulfide bridges on the protein must be reduced by thioredoxin which receives electrons from ferredoxin and the electron transport system of photosynthesis. Its function is as follows. The chloroplastic, NADP-dependent form is essential for the photosynthesis C4 cycle, which allows plants to circumvent the problem of photorespiration. In C4 plants, NADP-MDH activity acts to convert oxaloacetate to malate in chloroplasts of mesophyll cells for transport to the bundle sheath cells. The polypeptide is Malate dehydrogenase [NADP], chloroplastic (Flaveria bidentis (Coastal plain yellowtops)).